Here is a 596-residue protein sequence, read N- to C-terminus: Elongation factor 4 (596 aa).

A tr-type G domain is found at 2 to 184 (RNIRNFSIIA…AIVHRIPPPK (183 aa)). Residues 14–19 (DHGKST) and 131–134 (NKID) contribute to the GTP site.

It belongs to the TRAFAC class translation factor GTPase superfamily. Classic translation factor GTPase family. LepA subfamily.

The protein localises to the cell inner membrane. The enzyme catalyses GTP + H2O = GDP + phosphate + H(+). In terms of biological role, required for accurate and efficient protein synthesis under certain stress conditions. May act as a fidelity factor of the translation reaction, by catalyzing a one-codon backward translocation of tRNAs on improperly translocated ribosomes. Back-translocation proceeds from a post-translocation (POST) complex to a pre-translocation (PRE) complex, thus giving elongation factor G a second chance to translocate the tRNAs correctly. Binds to ribosomes in a GTP-dependent manner. The sequence is that of Elongation factor 4 from Xanthomonas euvesicatoria pv. vesicatoria (strain 85-10) (Xanthomonas campestris pv. vesicatoria).